Reading from the N-terminus, the 700-residue chain is Serine/threonine-protein kinase WNK1 (700 aa).

The region spanning 24 to 281 (GRYNEVLGKG…ARELLDDPFL (258 aa)) is the Protein kinase domain. ATP is bound by residues 104-107 (TELF) and Lys-154. The active-site Proton acceptor is the Asp-171. A compositionally biased stretch (low complexity) spans 314-339 (NYPSNSSSLNRQYSNGNYPSNSSSLN). Disordered regions lie at residues 314-345 (NYPS…YSNG), 551-575 (ESRE…EVLY), and 647-666 (ESGE…SVSG). A compositionally biased stretch (basic and acidic residues) spans 551 to 565 (ESRELSSIDSGHNHS). Positions 566–575 (EEEEEEEVLY) are enriched in acidic residues.

The protein belongs to the protein kinase superfamily. Ser/Thr protein kinase family. WNK subfamily. In terms of processing, autophosphorylated.

It carries out the reaction L-seryl-[protein] + ATP = O-phospho-L-seryl-[protein] + ADP + H(+). The enzyme catalyses L-threonyl-[protein] + ATP = O-phospho-L-threonyl-[protein] + ADP + H(+). In terms of biological role, regulates flowering time by modulating the photoperiod pathway. Phosphorylates APRR3. This chain is Serine/threonine-protein kinase WNK1 (WNK1), found in Arabidopsis thaliana (Mouse-ear cress).